The sequence spans 404 residues: Sodium/glutamate symporter (404 aa).

Helical transmembrane passes span 5 to 25, 33 to 53, 69 to 89, 95 to 115, 161 to 181, 219 to 239, 245 to 265, 277 to 297, 307 to 327, 338 to 358, and 373 to 393; these read FSTY…YFLV, TFNI…LLIW, TTMM…SRLI, LVVF…IGIA, IAIA…GPVA, SLIE…YLDV, ALQL…RNIL, AIDV…LMSL, IDVL…AIFI, AVVL…TAIA, and AFLI…AALL.

It belongs to the glutamate:Na(+) symporter (ESS) (TC 2.A.27) family.

The protein localises to the cell inner membrane. Functionally, catalyzes the sodium-dependent transport of glutamate. In Haemophilus influenzae (strain ATCC 51907 / DSM 11121 / KW20 / Rd), this protein is Sodium/glutamate symporter.